A 435-amino-acid polypeptide reads, in one-letter code: Deoxybrevianamide E synthase (435 aa).

The interval Met1–Ser28 is disordered. Glu96 is a brevianamide F binding site. Dimethylallyl diphosphate contacts are provided by Arg110, Lys195, Tyr197, Lys265, Tyr267, Tyr354, Tyr419, and Tyr423.

Belongs to the tryptophan dimethylallyltransferase family. Monomer.

It carries out the reaction brevianamide F + dimethylallyl diphosphate = deoxybrevianamide E + diphosphate. It participates in alkaloid biosynthesis. Deoxybrevianamide E synthase; part of the gene cluster that mediates the biosynthesis of notoamide, a fungal indole alkaloid that belongs to a family of natural products containing a characteristic bicyclo[2.2.2]diazaoctane core. The first step of notoamide biosynthesis involves coupling of L-proline and L-tryptophan by the bimodular NRPS notE', to produce cyclo-L-tryptophan-L-proline called brevianamide F. The reverse prenyltransferase notF' then acts as a deoxybrevianamide E synthase and converts brevianamide F to deoxybrevianamide E via reverse prenylation at C-2 of the indole ring leading to the bicyclo[2.2.2]diazaoctane core. Deoxybrevianamide E is further hydroxylated at C-6 of the indole ring, likely catalyzed by the cytochrome P450 monooxygenase notG', to yield 6-hydroxy-deoxybrevianamide E. 6-hydroxy-deoxybrevianamide E is a specific substrate of the prenyltransferase notC' for normal prenylation at C-7 to produce 6-hydroxy-7-prenyl-deoxybrevianamide, also called notoamide S. As the proposed pivotal branching point in notoamide biosynthesis, notoamide S can be diverted to notoamide E through an oxidative pyran ring closure putatively catalyzed by either notH' cytochrome P450 monooxygenase or the notD' FAD-linked oxidoreductase. This step would be followed by an indole 2,3-epoxidation-initiated pinacol-like rearrangement catalyzed by the notB' FAD-dependent monooxygenase leading to the formation of notoamide C and notoamide D. On the other hand notoamide S is converted to notoamide T by notH' (or notD'), a bifunctional oxidase that also functions as the intramolecular Diels-Alderase responsible for generation of (-)-notoamide T. To generate antipodal (+)-notoaminide T, notH (or notD) in Aspergillus strain MF297-2 is expected to catalyze a Diels-Alder reaction leading to the opposite stereochemistry. The remaining oxidoreductase notD' (or notH') likely catalyzes the oxidative pyran ring formation to yield (-)-stephacidin A. The FAD-dependent monooxygenase notI' is highly similar to notB' and is predicted to catalyze a similar conversion from (-)-stephacidin A to (+)-notoamide B via the 2,3-epoxidation of (-)-stephacidin A followed by a pinacol-type rearrangement. Finally, it remains unclear which enzyme could be responsible for the final hydroxylation steps leading to notoamide A and sclerotiamide. The sequence is that of Deoxybrevianamide E synthase from Aspergillus versicolor.